Reading from the N-terminus, the 161-residue chain is Fatty acid-binding protein homolog 2 (161 aa).

The signal sequence occupies residues 1 to 19 (MSSKFLILLAFCGATLVAA).

It belongs to the calycin superfamily. Fatty-acid binding protein (FABP) family.

It is found in the secreted. Its function is as follows. May play a role in sequestering potentially toxic fatty acids and their peroxidation products, or it may be involved in the maintenance of the impermeable lipid layer of the eggshell. The sequence is that of Fatty acid-binding protein homolog 2 (lbp-2) from Caenorhabditis elegans.